The sequence spans 479 residues: Aspartyl/glutamyl-tRNA(Asn/Gln) amidotransferase subunit B (479 aa).

The protein belongs to the GatB/GatE family. GatB subfamily. In terms of assembly, heterotrimer of A, B and C subunits.

The enzyme catalyses L-glutamyl-tRNA(Gln) + L-glutamine + ATP + H2O = L-glutaminyl-tRNA(Gln) + L-glutamate + ADP + phosphate + H(+). It catalyses the reaction L-aspartyl-tRNA(Asn) + L-glutamine + ATP + H2O = L-asparaginyl-tRNA(Asn) + L-glutamate + ADP + phosphate + 2 H(+). Its function is as follows. Allows the formation of correctly charged Asn-tRNA(Asn) or Gln-tRNA(Gln) through the transamidation of misacylated Asp-tRNA(Asn) or Glu-tRNA(Gln) in organisms which lack either or both of asparaginyl-tRNA or glutaminyl-tRNA synthetases. The reaction takes place in the presence of glutamine and ATP through an activated phospho-Asp-tRNA(Asn) or phospho-Glu-tRNA(Gln). This is Aspartyl/glutamyl-tRNA(Asn/Gln) amidotransferase subunit B from Streptococcus pyogenes serotype M6 (strain ATCC BAA-946 / MGAS10394).